We begin with the raw amino-acid sequence, 214 residues long: MDIQQQAIGFLGGTFDPIHFGHLRPALEITEALSLQQLFIMPNHIAPHKSASHASARQRSEMVELAISHQARMTIDKRELKRHKPSYTIDTLKELKIEYPNTPICFIMGMDSLISFDKWFDWKSILSYCHLIISHRPGWQNKFNKQVGALVAKHQTTDKHDLHNIQFGKIYFQATSQLAISSTEIRTLLNQDISIDFLTPDSVINYIKEQHLYK.

The protein belongs to the NadD family.

The enzyme catalyses nicotinate beta-D-ribonucleotide + ATP + H(+) = deamido-NAD(+) + diphosphate. It functions in the pathway cofactor biosynthesis; NAD(+) biosynthesis; deamido-NAD(+) from nicotinate D-ribonucleotide: step 1/1. Its function is as follows. Catalyzes the reversible adenylation of nicotinate mononucleotide (NaMN) to nicotinic acid adenine dinucleotide (NaAD). This chain is Probable nicotinate-nucleotide adenylyltransferase, found in Psychromonas ingrahamii (strain DSM 17664 / CCUG 51855 / 37).